A 94-amino-acid chain; its full sequence is Protein S100-A1 (94 aa).

EF-hand domains are found at residues 13–48 and 50–85; these read INVF…FLDV and KDAD…LTVA. Ca(2+) contacts are provided by lysine 28, glutamate 33, aspartate 63, asparagine 65, aspartate 67, glutamate 69, and glutamate 74. Cysteine 86 bears the S-nitrosocysteine mark.

It belongs to the S-100 family. As to quaternary structure, dimer of either two alpha chains, or two beta chains, or one alpha and one beta chain. Also forms heterodimers with S100P. Interacts with AGER. Interacts with CAPZA1. Interacts with FKBP4. Interacts with RYR1 and RYR2. Interacts with CACYBP in a calcium-dependent manner. Interacts with PPP5C (via TPR repeats); the interaction is calcium-dependent and modulates PPP5C activity. Interacts with ATP2A2 and PLN in a Ca(2+)-dependent manner. Interacts with mitochondrial F1-ATPase subunits ATP5F1A and ATP5F1B; these interactions increase F1-ATPase activity. Post-translationally, glutathionylated; glutathionylation increases affinity to calcium about 10-fold. Although predominant among the water-soluble brain proteins, S100 is also found in a variety of other tissues.

The protein localises to the cytoplasm. The protein resides in the sarcoplasmic reticulum. Its subcellular location is the mitochondrion. In terms of biological role, small calcium binding protein that plays important roles in several biological processes such as Ca(2+) homeostasis, chondrocyte biology and cardiomyocyte regulation. In response to an increase in intracellular Ca(2+) levels, binds calcium which triggers conformational changes. These changes allow interactions with specific target proteins and modulate their activity. Regulates a network in cardiomyocytes controlling sarcoplasmic reticulum Ca(2+) cycling and mitochondrial function through interaction with the ryanodine receptors RYR1 and RYR2, sarcoplasmic reticulum Ca(2+)-ATPase/ATP2A2 and mitochondrial F1-ATPase. Facilitates diastolic Ca(2+) dissociation and myofilament mechanics in order to improve relaxation during diastole. The chain is Protein S100-A1 (S100a1) from Rattus norvegicus (Rat).